A 1049-amino-acid chain; its full sequence is Cellulose synthase A catalytic subunit 4 [UDP-forming] (1049 aa).

Residues 1–215 (MEPNTMASFD…ISSSKISPYR (215 aa)) are Cytoplasmic-facing. Residues C23, C26, C42, C45, C50, C53, C65, and C68 each contribute to the Zn(2+) site. The RING-type; degenerate zinc finger occupies 23-69 (CKVCGDEVKDDDNGQTFVACHVCVYPVCKPCYEYERSNGNKCCPQCN). Residues 76-98 (KGSPKIAGDEENNGPDDSDDELN) are disordered. The segment covering 84–96 (DEENNGPDDSDDE) has biased composition (acidic residues). A Phosphoserine modification is found at S135. A helical membrane pass occupies residues 216–236 (IVIVLRLVILVFFFRFRILTP). Residues 237–239 (AKD) are Extracellular-facing. A helical membrane pass occupies residues 240-260 (AYPLWLISVICEIWFALSWIL). Residues 261 to 831 (DQFPKWFPIN…INTIVYPFTS (571 aa)) lie on the Cytoplasmic side of the membrane. UDP-alpha-D-glucose contacts are provided by S299, K305, E306, and D335. Residue D335 is part of the active site. The stretch at 389–416 (VKDRRAMKREYEEFKVRINALVAKAQKK) forms a coiled coil. Residue K476 participates in UDP-alpha-D-glucose binding. Mn(2+) is bound by residues K477 and D501. The active site involves D748. The helical transmembrane segment at 832-852 (IPLLAYCTIPAVCLLTGKFII) threads the bilayer. Over 853 to 857 (PTINN) the chain is Extracellular. Residues 858-878 (FASIWFLALFLSIIATAILEL) form a helical membrane-spanning segment. Residues 879 to 895 (RWSGVSINDLWRNEQFW) are Cytoplasmic-facing. The helical transmembrane segment at 896–916 (VIGGVSAHLFAVFQGLLKVLF) threads the bilayer. The Extracellular portion of the chain corresponds to 917–945 (GVDTNFTVTSKGASDEADEFGDLYLFKWT). A glycan (N-linked (GlcNAc...) asparagine) is linked at N921. A helical transmembrane segment spans residues 946–966 (TLLIPPTTLIILNMVGVVAGV). The Cytoplasmic portion of the chain corresponds to 967–977 (SDAINNGYGSW). The helical transmembrane segment at 978-998 (GPLFGKLFFAFWVIVHLYPFL) threads the bilayer. The Extracellular portion of the chain corresponds to 999-1007 (KGLMGRQNR). The helical transmembrane segment at 1008–1028 (TPTIVVLWSILLASIFSLVWV) threads the bilayer. The Cytoplasmic portion of the chain corresponds to 1029 to 1049 (RIDPFLPKQTGPLLKQCGVDC).

Belongs to the glycosyltransferase 2 family. Plant cellulose synthase subfamily. Interacts with CESA7 and CESA8. Assembly with CESA7 and CESA8 is required for functional complex and localization in secondary cell wall deposition sites. Interacts with STL1 and STL2, but not with GOT1. Zn(2+) serves as cofactor. It depends on Mn(2+) as a cofactor. In terms of processing, S-acylated. In terms of tissue distribution, confined to secondary cell wall developing tissues such as xylems and interfascicular regions. Expressed in roots, hypocotyls, leaves, inflorescences and flowers.

It is found in the cell membrane. It carries out the reaction [(1-&gt;4)-beta-D-glucosyl](n) + UDP-alpha-D-glucose = [(1-&gt;4)-beta-D-glucosyl](n+1) + UDP + H(+). It functions in the pathway glycan metabolism; plant cellulose biosynthesis. Functionally, catalytic subunit of cellulose synthase terminal complexes ('rosettes'), required for beta-1,4-glucan microfibril crystallization, a major mechanism of the cell wall formation. Involved in the secondary cell wall formation. Required for the xylem cell wall thickening. This is Cellulose synthase A catalytic subunit 4 [UDP-forming] from Arabidopsis thaliana (Mouse-ear cress).